A 534-amino-acid chain; its full sequence is O-phosphoserine--tRNA(Cys) ligase (534 aa).

Substrate contacts are provided by residues histidine 186–threonine 188, serine 231–serine 233, tyrosine 273–tyrosine 274, and asparagine 325.

It belongs to the class-II aminoacyl-tRNA synthetase family. O-phosphoseryl-tRNA(Cys) synthetase subfamily. As to quaternary structure, homotetramer. Interacts with SepCysS.

The catalysed reaction is tRNA(Cys) + O-phospho-L-serine + ATP = O-phospho-L-seryl-tRNA(Cys) + AMP + diphosphate. Catalyzes the attachment of O-phosphoserine (Sep) to tRNA(Cys). In Archaeoglobus fulgidus (strain ATCC 49558 / DSM 4304 / JCM 9628 / NBRC 100126 / VC-16), this protein is O-phosphoserine--tRNA(Cys) ligase (sepS).